We begin with the raw amino-acid sequence, 220 residues long: Ribonuclease HII (220 aa).

Positions 32 to 220 (KHIVGIDEAG…FAPIKGRYSV (189 aa)) constitute an RNase H type-2 domain. Positions 38, 39, and 130 each coordinate a divalent metal cation.

The protein belongs to the RNase HII family. Mn(2+) is required as a cofactor. It depends on Mg(2+) as a cofactor.

It localises to the cytoplasm. It catalyses the reaction Endonucleolytic cleavage to 5'-phosphomonoester.. In terms of biological role, endonuclease that specifically degrades the RNA of RNA-DNA hybrids. This is Ribonuclease HII from Brucella anthropi (strain ATCC 49188 / DSM 6882 / CCUG 24695 / JCM 21032 / LMG 3331 / NBRC 15819 / NCTC 12168 / Alc 37) (Ochrobactrum anthropi).